Reading from the N-terminus, the 174-residue chain is Protein C (174 aa).

It belongs to the morbillivirus protein C family.

The chain is Protein C (P/V/C) from Phocine distemper virus (PDV).